Reading from the N-terminus, the 278-residue chain is Inner membrane mitoribosome receptor MBA1, mitochondrial (278 aa).

Residues 1–33 (MSVLRSTCLFFPPRSLLISFNKRRLFSTSRLIL) constitute a mitochondrion transit peptide.

Interacts with OXA1 and MDM38. Binds to mitoribosomes in order to recruit them to the mitochondrial inner membrane.

It is found in the mitochondrion inner membrane. In terms of biological role, mitochondrial inner membrane-associated mitoribosome receptor that spatially aligns the mitoribosome exit tunnel with the membrane insertion machinery and allows cotranslational protein membrane insertion. This is Inner membrane mitoribosome receptor MBA1, mitochondrial from Saccharomyces cerevisiae (strain ATCC 204508 / S288c) (Baker's yeast).